Here is a 515-residue protein sequence, read N- to C-terminus: Maturase K (515 aa).

It belongs to the intron maturase 2 family. MatK subfamily.

The protein resides in the plastid. It localises to the chloroplast. Functionally, usually encoded in the trnK tRNA gene intron. Probably assists in splicing its own and other chloroplast group II introns. The polypeptide is Maturase K (Sorghum bicolor (Sorghum)).